The sequence spans 239 residues: Derlin-2 (239 aa).

Topologically, residues 1-57 (MAYQSLRLEYLQIPPVSRAYTTACVLTTAAVQLELITPFQLYFNPELIFKHFQIWRL) are cytoplasmic. A helical transmembrane segment spans residues 58–78 (ITNFLFFGPVGFNFLFNMIFL). Residues 79-96 (YRYCRMLEEGSFRGRTAD) lie on the Lumenal side of the membrane. A helical membrane pass occupies residues 97 to 117 (FVFMFLFGGFLMTLFGLFVSL). Residues 118 to 150 (VFLGQAFTIMLVYVWSRRNPYVRMNFFGLLNFQ) lie on the Cytoplasmic side of the membrane. The chain crosses the membrane as a helical span at residues 151-171 (APFLPWVLMGFSLLLGNSIIV). A topological domain (lumenal) is located at residue aspartate 172. A helical membrane pass occupies residues 173-193 (LLGIAVGHIYFFLEDIFPNQP). Residues 194–239 (GGIRILKTPSILRTIFDTPDEDPNYNPLPEERPGGFAWGEGQRLGG) are Cytoplasmic-facing. Residues 214–239 (EDPNYNPLPEERPGGFAWGEGQRLGG) form a disordered region. Residues 229–239 (FAWGEGQRLGG) are compositionally biased toward gly residues.

The protein belongs to the derlin family. In terms of assembly, forms homo- and heterooligomers with DERL3 and, to a lesser extent, with DERL1. Interacts with the SEL1L/SYVN1 and VCP/SELENOS protein complexes. Mediates association between VCP and EDEM1, as well as that between VCP and the misfolded glycoproteins. Interacts with OS9. Interacts with SELENOK and SELENOS. Interacts with the signal recognition particle/SRP and the SRP receptor; in the process of endoplasmic reticulum stress-induced pre-emptive quality control. Interacts with CCDC47. As to expression, widely expressed, with lowest levels in brain and heart.

Its subcellular location is the endoplasmic reticulum membrane. Its function is as follows. Functional component of endoplasmic reticulum-associated degradation (ERAD) for misfolded lumenal glycoproteins, but not that of misfolded nonglycoproteins. May act by forming a channel that allows the retrotranslocation of misfolded glycoproteins into the cytosol where they are ubiquitinated and degraded by the proteasome. May mediate the interaction between VCP and misfolded glycoproteins. May also be involved in endoplasmic reticulum stress-induced pre-emptive quality control, a mechanism that selectively attenuates the translocation of newly synthesized proteins into the endoplasmic reticulum and reroutes them to the cytosol for proteasomal degradation. This Mus musculus (Mouse) protein is Derlin-2.